A 327-amino-acid polypeptide reads, in one-letter code: Flap endonuclease 1 (327 aa).

The tract at residues 1 to 98 is N-domain; the sequence is MGVKLKDIIQ…ETIDQRRQTR (98 aa). Mg(2+) contacts are provided by D27, D80, E152, E154, D173, D175, and D226. The interval 116–246 is I-domain; that stretch reads EARKYAMRSS…KTALKLAKKG (131 aa). The tract at residues 319 to 327 is interaction with PCNA; the sequence is SQKSLEDWF.

Belongs to the XPG/RAD2 endonuclease family. FEN1 subfamily. As to quaternary structure, interacts with PCNA. PCNA stimulates the nuclease activity without altering cleavage specificity. Mg(2+) is required as a cofactor.

Its function is as follows. Structure-specific nuclease with 5'-flap endonuclease and 5'-3' exonuclease activities involved in DNA replication and repair. During DNA replication, cleaves the 5'-overhanging flap structure that is generated by displacement synthesis when DNA polymerase encounters the 5'-end of a downstream Okazaki fragment. Binds the unpaired 3'-DNA end and kinks the DNA to facilitate 5' cleavage specificity. Cleaves one nucleotide into the double-stranded DNA from the junction in flap DNA, leaving a nick for ligation. Also involved in the base excision repair (BER) pathway. Acts as a genome stabilization factor that prevents flaps from equilibrating into structures that lead to duplications and deletions. Also possesses 5'-3' exonuclease activity on nicked or gapped double-stranded DNA. This is Flap endonuclease 1 from Methanobrevibacter smithii (strain ATCC 35061 / DSM 861 / OCM 144 / PS).